A 385-amino-acid polypeptide reads, in one-letter code: 3-hydroxyisobutyryl-CoA hydrolase, mitochondrial (385 aa).

Residues Glu120, Gly145, Glu168, and Asp176 each coordinate substrate.

It belongs to the enoyl-CoA hydratase/isomerase family.

It localises to the mitochondrion. It carries out the reaction 3-hydroxy-2-methylpropanoyl-CoA + H2O = 3-hydroxy-2-methylpropanoate + CoA + H(+). It participates in amino-acid degradation; L-valine degradation. Hydrolyzes 3-hydroxyisobutyryl-CoA (HIBYL-CoA), a saline catabolite. Has high activity toward isobutyryl-CoA. Could be an isobutyryl-CoA dehydrogenase that functions in valine catabolism. Also hydrolyzes 3-hydroxypropanoyl-CoA. The polypeptide is 3-hydroxyisobutyryl-CoA hydrolase, mitochondrial (hibch) (Xenopus laevis (African clawed frog)).